The sequence spans 375 residues: Neuropeptide Y receptor type 4-2 (375 aa).

The Extracellular segment spans residues 1 to 39 (MNTSHLLALLLPKSPQGENRSKPLGTPYNFSEHCQDSVD). Asn-2, Asn-19, and Asn-29 each carry an N-linked (GlcNAc...) asparagine glycan. Residues 40-60 (VMVFIVTSYSIETVVGVLGNL) traverse the membrane as a helical segment. Residues 61–87 (CLMCVTVRQKEKANVTNLLIANLAFSD) are Cytoplasmic-facing. A helical transmembrane segment spans residues 88–108 (FLMCLLCQPLTAVYTIMDYWI). Residues 109-116 (FGETLCKM) lie on the Extracellular side of the membrane. Cysteines 114 and 201 form a disulfide. A helical transmembrane segment spans residues 117–137 (SAFIQCMSVTVSILSLVLVAL). The Cytoplasmic portion of the chain corresponds to 138–155 (ERHQLIINPTGWKPSISQ). A helical transmembrane segment spans residues 156–176 (AYLGIVLIWVIACVLSLPFLA). Over 177–212 (NSILENVFHKNHSKALEFLADKVVCTESWPLAHHRT) the chain is Extracellular. Residue Asn-187 is glycosylated (N-linked (GlcNAc...) asparagine). Residues 213 to 233 (IYTTFLLLFQYCLPLGFILVC) form a helical membrane-spanning segment. Residues 234–263 (YARIYRRLQRQGRVFHKGTYSLRAGHMKQV) lie on the Cytoplasmic side of the membrane. Residues 264–284 (NVVLVVMVVAFAVLWLPLHVF) traverse the membrane as a helical segment. Over 285-301 (NSLEDWHHEAIPICHGN) the chain is Extracellular. Residues 302–322 (LIFLVCHLLAMASTCVNPFIY) traverse the membrane as a helical segment. The Cytoplasmic portion of the chain corresponds to 323 to 375 (GFLNTNFKKEIKALVLTCQQSAPLEESEHLPLSTVHTEVSKGSLRLSGRSNPI). Residue Cys-340 is the site of S-palmitoyl cysteine attachment.

This sequence belongs to the G-protein coupled receptor 1 family.

The protein localises to the cell membrane. Functionally, g protein-coupled receptor for PPY/pancreatic polypeptide/PP, NPY/neuropeptide Y and PYY/peptide YY that is negatively coupled to cAMP. The rank order of affinity for these polypeptides and their derivatives is PP, PP (2-36) and [Ile-31, Gln-34] PP &gt; [Pro-34] PYY &gt; PYY and [Leu-31, Pro-34] NPY &gt; NPY &gt; PYY (3-36) and NPY (2-36) &gt; PP (13-36) &gt; PP (31-36) &gt; NPY free acid. The chain is Neuropeptide Y receptor type 4-2 from Homo sapiens (Human).